The sequence spans 311 residues: 4-hydroxy-tetrahydrodipicolinate synthase (311 aa).

Residue T51 participates in pyruvate binding. The active-site Proton donor/acceptor is Y140. K168 serves as the catalytic Schiff-base intermediate with substrate. I209 provides a ligand contact to pyruvate.

It belongs to the DapA family. In terms of assembly, homotetramer; dimer of dimers.

Its subcellular location is the cytoplasm. It carries out the reaction L-aspartate 4-semialdehyde + pyruvate = (2S,4S)-4-hydroxy-2,3,4,5-tetrahydrodipicolinate + H2O + H(+). The protein operates within amino-acid biosynthesis; L-lysine biosynthesis via DAP pathway; (S)-tetrahydrodipicolinate from L-aspartate: step 3/4. Catalyzes the condensation of (S)-aspartate-beta-semialdehyde [(S)-ASA] and pyruvate to 4-hydroxy-tetrahydrodipicolinate (HTPA). This chain is 4-hydroxy-tetrahydrodipicolinate synthase, found in Streptococcus pneumoniae (strain ATCC 700669 / Spain 23F-1).